The primary structure comprises 160 residues: Succinate dehydrogenase assembly factor 2-B, mitochondrial (160 aa).

A mitochondrion-targeting transit peptide spans methionine 1 to alanine 23.

It belongs to the SDHAF2 family. Interacts with the flavoprotein subunit within the SDH catalytic dimer.

The protein localises to the mitochondrion matrix. Its function is as follows. Plays an essential role in the assembly of succinate dehydrogenase (SDH), an enzyme complex (also referred to as respiratory complex II) that is a component of both the tricarboxylic acid (TCA) cycle and the mitochondrial electron transport chain, and which couples the oxidation of succinate to fumarate with the reduction of ubiquinone (coenzyme Q) to ubiquinol. Required for flavinylation (covalent attachment of FAD) of the flavoprotein subunit of the SDH catalytic dimer. The chain is Succinate dehydrogenase assembly factor 2-B, mitochondrial from Drosophila pseudoobscura pseudoobscura (Fruit fly).